Here is a 208-residue protein sequence, read N- to C-terminus: Large ribosomal subunit protein uL4 (208 aa).

Residues 45-96 are disordered; that stretch reads RQGTHKSKTRAEVRGGGRKPYRQKGTGNARQGSTRSPLMVGGGTIFGPTPHG. Over residues 69–80 the composition is skewed to polar residues; the sequence is GTGNARQGSTRS.

Belongs to the universal ribosomal protein uL4 family. In terms of assembly, part of the 50S ribosomal subunit.

Its function is as follows. One of the primary rRNA binding proteins, this protein initially binds near the 5'-end of the 23S rRNA. It is important during the early stages of 50S assembly. It makes multiple contacts with different domains of the 23S rRNA in the assembled 50S subunit and ribosome. In terms of biological role, forms part of the polypeptide exit tunnel. This chain is Large ribosomal subunit protein uL4, found in Chlorobium phaeovibrioides (strain DSM 265 / 1930) (Prosthecochloris vibrioformis (strain DSM 265)).